Reading from the N-terminus, the 169-residue chain is Vimentin-type intermediate filament-associated coiled-coil protein (169 aa).

Residues 7–89 (LQIREANAHL…VHSLQATVHQ (83 aa)) adopt a coiled-coil conformation. The segment covering 126-135 (RLGPLPASDP) has biased composition (low complexity). A disordered region spans residues 126 to 169 (RLGPLPASDPGHPPPGGPGPPLDNSTGEEADRDHLQPAVFGTTV). A compositionally biased stretch (pro residues) spans 136–146 (GHPPPGGPGPP).

Its subcellular location is the cytoplasm. In Homo sapiens (Human), this protein is Vimentin-type intermediate filament-associated coiled-coil protein (VMAC).